We begin with the raw amino-acid sequence, 396 residues long: Putative arsenical pump-driving ATPase 1 (396 aa).

8–15 (GKGGVGKT) contacts ATP.

This sequence belongs to the arsA ATPase family.

The enzyme catalyses arsenite(in) + ATP + H2O = arsenite(out) + ADP + phosphate + H(+). Its function is as follows. Anion-transporting ATPase. Catalyzes the extrusion of arsenite. The sequence is that of Putative arsenical pump-driving ATPase 1 (arsA1) from Aquifex aeolicus (strain VF5).